We begin with the raw amino-acid sequence, 60 residues long: uncharacterized protein (60 aa).

A helical membrane pass occupies residues Phe33–Leu55.

This sequence belongs to the HHV-5 UL2 protein family.

The protein localises to the host membrane. This is an uncharacterized protein from Human cytomegalovirus (strain AD169) (HHV-5).